The chain runs to 164 residues: Phosphopantetheine adenylyltransferase (164 aa).

Residue Ser9 coordinates substrate. Residues Ser9–Phe10 and His17 contribute to the ATP site. The substrate site is built by Lys41, Val78, and Arg92. ATP contacts are provided by residues Gly93 to Arg95, Glu103, and Ser128 to Thr134.

The protein belongs to the bacterial CoaD family. As to quaternary structure, homohexamer. Requires Mg(2+) as cofactor.

It is found in the cytoplasm. It catalyses the reaction (R)-4'-phosphopantetheine + ATP + H(+) = 3'-dephospho-CoA + diphosphate. It functions in the pathway cofactor biosynthesis; coenzyme A biosynthesis; CoA from (R)-pantothenate: step 4/5. Functionally, reversibly transfers an adenylyl group from ATP to 4'-phosphopantetheine, yielding dephospho-CoA (dPCoA) and pyrophosphate. The sequence is that of Phosphopantetheine adenylyltransferase from Rhizobium etli (strain ATCC 51251 / DSM 11541 / JCM 21823 / NBRC 15573 / CFN 42).